A 399-amino-acid polypeptide reads, in one-letter code: Arginase (399 aa).

Mn(2+) contacts are provided by His-193, Asp-216, His-218, and Asp-220. Residues 218 to 222 (HADIN), 229 to 231 (SGN), and Asp-273 contribute to the substrate site. Asp-322 and Asp-324 together coordinate Mn(2+). Positions 336 and 367 each coordinate substrate.

Belongs to the arginase family. Mn(2+) serves as cofactor.

Its subcellular location is the cytoplasm. It catalyses the reaction L-arginine + H2O = urea + L-ornithine. It functions in the pathway nitrogen metabolism; urea cycle; L-ornithine and urea from L-arginine: step 1/1. The sequence is that of Arginase (CAR1) from Eremothecium gossypii (strain ATCC 10895 / CBS 109.51 / FGSC 9923 / NRRL Y-1056) (Yeast).